A 753-amino-acid polypeptide reads, in one-letter code: 5-methyltetrahydropteroyltriglutamate--homocysteine methyltransferase (753 aa).

Residues 17-20 (RELK) and lysine 117 each bind 5-methyltetrahydropteroyltri-L-glutamate. L-homocysteine contacts are provided by residues 431 to 433 (IGS) and glutamate 484. Residues 431-433 (IGS) and glutamate 484 each bind L-methionine. 5-methyltetrahydropteroyltri-L-glutamate is bound by residues 515–516 (RC) and tryptophan 561. Aspartate 599 serves as a coordination point for L-homocysteine. L-methionine is bound at residue aspartate 599. Glutamate 605 contributes to the 5-methyltetrahydropteroyltri-L-glutamate binding site. Zn(2+) contacts are provided by histidine 641, cysteine 643, and glutamate 665. The active-site Proton donor is the histidine 694. Cysteine 726 contributes to the Zn(2+) binding site.

This sequence belongs to the vitamin-B12 independent methionine synthase family. Zn(2+) serves as cofactor.

It carries out the reaction 5-methyltetrahydropteroyltri-L-glutamate + L-homocysteine = tetrahydropteroyltri-L-glutamate + L-methionine. Its pathway is amino-acid biosynthesis; L-methionine biosynthesis via de novo pathway; L-methionine from L-homocysteine (MetE route): step 1/1. Functionally, catalyzes the transfer of a methyl group from 5-methyltetrahydrofolate to homocysteine resulting in methionine formation. The polypeptide is 5-methyltetrahydropteroyltriglutamate--homocysteine methyltransferase (Shigella dysenteriae serotype 1 (strain Sd197)).